Consider the following 878-residue polypeptide: Leucine--tRNA ligase (878 aa).

Positions 56–66 (PYPSGKLHMGH) match the 'HIGH' region motif. The short motif at 630-634 (KMSKS) is the 'KMSKS' region element. Residue K633 coordinates ATP.

Belongs to the class-I aminoacyl-tRNA synthetase family.

The protein resides in the cytoplasm. The catalysed reaction is tRNA(Leu) + L-leucine + ATP = L-leucyl-tRNA(Leu) + AMP + diphosphate. In Prochlorococcus marinus (strain MIT 9313), this protein is Leucine--tRNA ligase.